The following is a 662-amino-acid chain: UvrABC system protein B (662 aa).

One can recognise a Helicase ATP-binding domain in the interval 31-188 (DNIEGGEKAQ…NDLVDIQFER (158 aa)). Residue 44–51 (GATGTGKT) participates in ATP binding. Positions 97 to 120 (YYDYYQPEAYVPSSDTYIEKDSSV) match the Beta-hairpin motif. The 167-residue stretch at 435 to 601 (QIDDLLGEIN…TIKKEIRDLI (167 aa)) folds into the Helicase C-terminal domain. The 36-residue stretch at 626 to 661 (KELVKKLEKQMQEAVEVLDFELAAQIRDMMLEVKAL) folds into the UVR domain.

Belongs to the UvrB family. In terms of assembly, forms a heterotetramer with UvrA during the search for lesions. Interacts with UvrC in an incision complex.

It is found in the cytoplasm. Functionally, the UvrABC repair system catalyzes the recognition and processing of DNA lesions. A damage recognition complex composed of 2 UvrA and 2 UvrB subunits scans DNA for abnormalities. Upon binding of the UvrA(2)B(2) complex to a putative damaged site, the DNA wraps around one UvrB monomer. DNA wrap is dependent on ATP binding by UvrB and probably causes local melting of the DNA helix, facilitating insertion of UvrB beta-hairpin between the DNA strands. Then UvrB probes one DNA strand for the presence of a lesion. If a lesion is found the UvrA subunits dissociate and the UvrB-DNA preincision complex is formed. This complex is subsequently bound by UvrC and the second UvrB is released. If no lesion is found, the DNA wraps around the other UvrB subunit that will check the other stand for damage. This chain is UvrABC system protein B, found in Streptococcus pneumoniae (strain P1031).